The chain runs to 198 residues: FMN-dependent NADH:quinone oxidoreductase (198 aa).

Residues 92-95 (MWNL) and 136-139 (SRGG) each bind FMN.

This sequence belongs to the azoreductase type 1 family. Homodimer. It depends on FMN as a cofactor.

The enzyme catalyses 2 a quinone + NADH + H(+) = 2 a 1,4-benzosemiquinone + NAD(+). It catalyses the reaction N,N-dimethyl-1,4-phenylenediamine + anthranilate + 2 NAD(+) = 2-(4-dimethylaminophenyl)diazenylbenzoate + 2 NADH + 2 H(+). Functionally, quinone reductase that provides resistance to thiol-specific stress caused by electrophilic quinones. Its function is as follows. Also exhibits azoreductase activity. Catalyzes the reductive cleavage of the azo bond in aromatic azo compounds to the corresponding amines. The protein is FMN-dependent NADH:quinone oxidoreductase of Clostridium perfringens (strain ATCC 13124 / DSM 756 / JCM 1290 / NCIMB 6125 / NCTC 8237 / Type A).